Consider the following 470-residue polypeptide: Uronate isomerase (470 aa).

The protein belongs to the metallo-dependent hydrolases superfamily. Uronate isomerase family.

It carries out the reaction D-glucuronate = D-fructuronate. The enzyme catalyses aldehydo-D-galacturonate = keto-D-tagaturonate. Its pathway is carbohydrate metabolism; pentose and glucuronate interconversion. The polypeptide is Uronate isomerase (Salmonella arizonae (strain ATCC BAA-731 / CDC346-86 / RSK2980)).